A 194-amino-acid polypeptide reads, in one-letter code: Large ribosomal subunit protein bL25 (194 aa).

This sequence belongs to the bacterial ribosomal protein bL25 family. CTC subfamily. In terms of assembly, part of the 50S ribosomal subunit; part of the 5S rRNA/L5/L18/L25 subcomplex. Contacts the 5S rRNA. Binds to the 5S rRNA independently of L5 and L18.

Functionally, this is one of the proteins that binds to the 5S RNA in the ribosome where it forms part of the central protuberance. The protein is Large ribosomal subunit protein bL25 of Geobacter sulfurreducens (strain ATCC 51573 / DSM 12127 / PCA).